A 62-amino-acid polypeptide reads, in one-letter code: Photosystem II reaction center protein Z (62 aa).

Position 1 is an N-formylmethionine (M1). Over 1 to 4 (MTIL) the chain is Lumenal. Residues 5–25 (FQLALAALVILSFVMVIGVPV) form a helical membrane-spanning segment. The Cytoplasmic portion of the chain corresponds to 26 to 36 (AYASPQDWDRS). Residues 37-58 (KQLIFLGSGLWIALVLVVGVLN) form a helical membrane-spanning segment. Residues 59–62 (FFVV) are Lumenal-facing.

Belongs to the PsbZ family. In terms of assembly, PSII is composed of 1 copy each of membrane proteins PsbA, PsbB, PsbC, PsbD, PsbE, PsbF, PsbH, PsbI, PsbJ, PsbK, PsbL, PsbM, PsbT, PsbX, PsbY, PsbZ, Psb30/Ycf12, peripheral proteins PsbO, CyanoQ (PsbQ), PsbU, PsbV and a large number of cofactors. It forms dimeric complexes. Part of a photosystem II (PSII) assembly intermediate complex PSII-I; crystallized from a strain deleted of psbJ, it forms monomeric PSII before addition of the oxygen evolving complex. PSII-I includes 3 assembly factors not found in mature PSII (Psb27, Psb28 and Psb34). Requires PSII binds multiple chlorophylls, carotenoids and specific lipids. as cofactor.

It is found in the cellular thylakoid membrane. Functionally, may control the interaction of photosystem II (PSII) cores with the light-harvesting antenna, regulates electron flow through the 2 photosystem reaction centers. PSII is a light-driven water plastoquinone oxidoreductase, using light energy to abstract electrons from H(2)O, generating a proton gradient subsequently used for ATP formation. May also aid in binding of PsbK, Psb30/Ycf12 and the oxygen-evolving complex to PSII, at least in vitro. This chain is Photosystem II reaction center protein Z, found in Thermosynechococcus vestitus (strain NIES-2133 / IAM M-273 / BP-1).